Consider the following 200-residue polypeptide: Insulin, isoform 2 (200 aa).

The disordered stretch occupies residues 148-200; that stretch reads EVDSSPQPQGSESLPAQPPAQPAPQPEPQQAREPSPEVSCCGLWPRRPQRSQN. Positions 163 to 174 are enriched in pro residues; it reads AQPPAQPAPQPE. The span at 175–184 shows a compositional bias: low complexity; sequence PQQAREPSPE.

As to expression, expressed in pancreas, eye and, to a lower extent, in limb.

The sequence is that of Insulin, isoform 2 (INS-IGF2) from Homo sapiens (Human).